Reading from the N-terminus, the 271-residue chain is Peroxiredoxin-4 (271 aa).

The N-terminal stretch at 1-37 is a signal peptide; the sequence is MEALPLLAATTPDHGRHRRLLLLPLLLFLLPAGAVQG. Residues 79–237 form the Thioredoxin domain; the sequence is AKISKPAPYW…TLRLVQAFQY (159 aa). The Cysteine sulfenic acid (-SOH) intermediate role is filled by C124.

The protein belongs to the peroxiredoxin family. AhpC/Prx1 subfamily. In terms of assembly, homodimer; disulfide-linked, upon oxidation. 5 homodimers assemble to form a ring-like decamer. Can form heterodimers with PRDX1. In terms of processing, the enzyme can be inactivated by further oxidation of the cysteine sulfenic acid (C(P)-SOH) to sulphinic acid (C(P)-SO2H) and sulphonic acid (C(P)-SO3H) instead of its condensation to a disulfide bond.

Its subcellular location is the cytoplasm. It localises to the endoplasmic reticulum. The enzyme catalyses a hydroperoxide + [thioredoxin]-dithiol = an alcohol + [thioredoxin]-disulfide + H2O. Its function is as follows. Thiol-specific peroxidase that catalyzes the reduction of hydrogen peroxide and organic hydroperoxides to water and alcohols, respectively. Plays a role in cell protection against oxidative stress by detoxifying peroxides and as sensor of hydrogen peroxide-mediated signaling events. Regulates the activation of NF-kappa-B in the cytosol by a modulation of I-kappa-B-alpha phosphorylation. In Homo sapiens (Human), this protein is Peroxiredoxin-4 (PRDX4).